A 482-amino-acid chain; its full sequence is Lipoamide acyltransferase component of branched-chain alpha-keto acid dehydrogenase complex, mitochondrial (482 aa).

Residues methionine 1 to glutamine 61 constitute a mitochondrion transit peptide. One can recognise a Lipoyl-binding domain in the interval isoleucine 64–glutamate 139. An N6-lipoyllysine modification is found at lysine 105. Residue lysine 133 is modified to N6-succinyllysine. The tract at residues aspartate 145–glutamate 160 is critical for association with PPM1K. Positions serine 146–threonine 171 are disordered. A compositionally biased stretch (basic and acidic residues) spans serine 157–glycine 168. The Peripheral subunit-binding (PSBD) domain maps to leucine 172 to leucine 209. Lysine 196 is subject to N6-acetyllysine; alternate. Position 196 is an N6-succinyllysine; alternate (lysine 196). Lysine 202 carries the N6-acetyllysine modification. Positions proline 218 to proline 230 are enriched in pro residues. Positions proline 218–proline 238 are disordered. A Phosphoserine modification is found at serine 220. Lysine 243 and lysine 250 each carry N6-acetyllysine. Lysine 261 is subject to N6-succinyllysine. Lysine 289 bears the N6-acetyllysine; alternate mark. An N6-succinyllysine; alternate modification is found at lysine 289. Arginine 291 contacts CoA. Lysine 295 and lysine 304 each carry N6-acetyllysine. 8 residues coordinate CoA: serine 306, aspartate 349, glutamine 378, serine 399, asparagine 400, serine 403, glycine 424, and isoleucine 426. Position 435 is an N6-acetyllysine (lysine 435). Lysine 440 carries the post-translational modification N6-acetyllysine; alternate. Lysine 440 carries the post-translational modification N6-succinyllysine; alternate. Residues histidine 452 and aspartate 456 contribute to the active site.

It belongs to the 2-oxoacid dehydrogenase family. In terms of assembly, forms a 24-polypeptide structural core with octahedral symmetry that represents the E2 component of the branched-chain alpha-ketoacid dehydrogenase (BCKDH) complex. The BCKDH complex is composed of three major building blocks E1, E2 and E3. It is organized around E2, a 24-meric cubic core composed of DBT, to which are associated 6 to 12 copies of E1, and approximately 6 copies of the dehydrogenase E3, a DLD dimer. Interacts with PPM1K with a 24:1 stoichiometry; the N-terminal region (residues 49-61) of PPM1K and C-terminal linker of the lipoyl domain of DBT/E2 (residues 145-160) are critical for this interaction whereas the lipoyl prosthetic group is dispensable. This interaction requires colocalization in mitochondria. PPM1K competes with BCKDK for binding to DBT; this interaction is modulated by branched-chain alpha-keto acids (BCKAs). At steady state, BCKDH holoenzyme preferentially binds BCKDK and BCKDHA is phosphorylated. In response to high levels of BCKAs, BCKDK is replaced by PPM1K leading to BCKDHA dephosphorylation. Requires (R)-lipoate as cofactor. In terms of tissue distribution, expressed in kidney (at protein level).

Its subcellular location is the mitochondrion matrix. The catalysed reaction is N(6)-[(R)-dihydrolipoyl]-L-lysyl-[protein] + 2-methylpropanoyl-CoA = N(6)-[(R)-S(8)-2-methylpropanoyldihydrolipoyl]-L-lysyl-[protein] + CoA. Its function is as follows. The branched-chain alpha-keto dehydrogenase complex catalyzes the overall conversion of alpha-keto acids to acyl-CoA and CO(2). It contains multiple copies of three enzymatic components: branched-chain alpha-keto acid decarboxylase (E1), lipoamide acyltransferase (E2) and lipoamide dehydrogenase (E3). Within this complex, the catalytic function of this enzyme is to accept, and to transfer to coenzyme A, acyl groups that are generated by the branched-chain alpha-keto acid decarboxylase component. This is Lipoamide acyltransferase component of branched-chain alpha-keto acid dehydrogenase complex, mitochondrial (DBT) from Bos taurus (Bovine).